The primary structure comprises 232 residues: Large ribosomal subunit protein uL1 (232 aa).

This sequence belongs to the universal ribosomal protein uL1 family. As to quaternary structure, part of the 50S ribosomal subunit.

Its function is as follows. Binds directly to 23S rRNA. The L1 stalk is quite mobile in the ribosome, and is involved in E site tRNA release. Protein L1 is also a translational repressor protein, it controls the translation of the L11 operon by binding to its mRNA. This is Large ribosomal subunit protein uL1 from Burkholderia mallei (strain NCTC 10247).